Here is a 56-residue protein sequence, read N- to C-terminus: uncharacterized protein (56 aa).

This is an uncharacterized protein from Saccharomyces cerevisiae (strain ATCC 204508 / S288c) (Baker's yeast).